Reading from the N-terminus, the 67-residue chain is Protein AaeX (67 aa).

2 helical membrane passes run 3-23 (LFPV…KLLL) and 43-63 (FVWH…YLIS).

Belongs to the AaeX family.

It is found in the cell membrane. In Salmonella gallinarum (strain 287/91 / NCTC 13346), this protein is Protein AaeX.